A 322-amino-acid polypeptide reads, in one-letter code: tRNA U34 carboxymethyltransferase (322 aa).

Carboxy-S-adenosyl-L-methionine-binding positions include lysine 92, tryptophan 106, lysine 111, glycine 131, 153 to 155 (DPS), 181 to 182 (VE), methionine 196, tyrosine 200, and arginine 315.

This sequence belongs to the class I-like SAM-binding methyltransferase superfamily. CmoB family. As to quaternary structure, homotetramer.

The catalysed reaction is carboxy-S-adenosyl-L-methionine + 5-hydroxyuridine(34) in tRNA = 5-carboxymethoxyuridine(34) in tRNA + S-adenosyl-L-homocysteine + H(+). Its function is as follows. Catalyzes carboxymethyl transfer from carboxy-S-adenosyl-L-methionine (Cx-SAM) to 5-hydroxyuridine (ho5U) to form 5-carboxymethoxyuridine (cmo5U) at position 34 in tRNAs. In Pseudoalteromonas translucida (strain TAC 125), this protein is tRNA U34 carboxymethyltransferase.